Reading from the N-terminus, the 265-residue chain is Mlc titration factor A (265 aa).

Residues histidine 111, histidine 148, histidine 152, and glutamate 211 each coordinate Zn(2+).

The protein belongs to the MtfA family. In terms of assembly, interacts with Mlc. Zn(2+) is required as a cofactor.

It is found in the cytoplasm. Involved in the modulation of the activity of the glucose-phosphotransferase system (glucose-PTS). Interacts with the transcriptional repressor Mlc, preventing its interaction with DNA and leading to the modulation of expression of genes regulated by Mlc, including ptsG, which encodes the PTS system glucose-specific EIICB component. Its function is as follows. Shows zinc-dependent metallopeptidase activity. This Escherichia coli O17:K52:H18 (strain UMN026 / ExPEC) protein is Mlc titration factor A.